A 590-amino-acid polypeptide reads, in one-letter code: O-fucosyltransferase 2 (590 aa).

A compositionally biased stretch (basic and acidic residues) spans 1 to 16; it reads MGQERPNDEERPESRD. The segment at 1–26 is disordered; that stretch reads MGQERPNDEERPESRDLGVYGCSPPH. Residues 67 to 87 traverse the membrane as a helical; Signal-anchor for type II membrane protein segment; the sequence is TAIGVMAILGFFCLVNWFMLS. The N-linked (GlcNAc...) asparagine glycan is linked to N125. Residue 365-367 coordinates substrate; it reads HLR. N485 and N546 each carry an N-linked (GlcNAc...) asparagine glycan.

The protein belongs to the glycosyltransferase GT106 family.

It is found in the membrane. It participates in glycan metabolism. The chain is O-fucosyltransferase 2 from Arabidopsis thaliana (Mouse-ear cress).